A 246-amino-acid chain; its full sequence is tRNA (guanine-N(1)-)-methyltransferase (246 aa).

S-adenosyl-L-methionine is bound by residues G112 and I131–L136.

The protein belongs to the RNA methyltransferase TrmD family. Homodimer.

Its subcellular location is the cytoplasm. The catalysed reaction is guanosine(37) in tRNA + S-adenosyl-L-methionine = N(1)-methylguanosine(37) in tRNA + S-adenosyl-L-homocysteine + H(+). In terms of biological role, specifically methylates guanosine-37 in various tRNAs. The chain is tRNA (guanine-N(1)-)-methyltransferase from Thermosipho africanus (strain TCF52B).